A 492-amino-acid chain; its full sequence is uncharacterized protein (492 aa).

266–273 (GIQGTGKS) serves as a coordination point for ATP.

The protein belongs to the AAA ATPase family. Highly divergent.

The protein resides in the plastid. Its subcellular location is the chloroplast. This is an uncharacterized protein from Pyropia yezoensis (Susabi-nori).